A 406-amino-acid chain; its full sequence is Cysteine desulfurase (406 aa).

Lysine 226 is modified (N6-(pyridoxal phosphate)lysine). The active-site Cysteine persulfide intermediate is the cysteine 364.

It belongs to the class-V pyridoxal-phosphate-dependent aminotransferase family. Csd subfamily. As to quaternary structure, homodimer. Interacts with SufE and the SufBCD complex composed of SufB, SufC and SufD. The interaction with SufE is required to mediate the direct transfer of the sulfur atom from the S-sulfanylcysteine. Pyridoxal 5'-phosphate is required as a cofactor.

The protein localises to the cytoplasm. It catalyses the reaction (sulfur carrier)-H + L-cysteine = (sulfur carrier)-SH + L-alanine. The enzyme catalyses L-selenocysteine + AH2 = hydrogenselenide + L-alanine + A + H(+). The protein operates within cofactor biosynthesis; iron-sulfur cluster biosynthesis. In terms of biological role, cysteine desulfurases mobilize the sulfur from L-cysteine to yield L-alanine, an essential step in sulfur metabolism for biosynthesis of a variety of sulfur-containing biomolecules. Component of the suf operon, which is activated and required under specific conditions such as oxidative stress and iron limitation. Acts as a potent selenocysteine lyase in vitro, that mobilizes selenium from L-selenocysteine. Selenocysteine lyase activity is however unsure in vivo. This chain is Cysteine desulfurase, found in Escherichia coli O9:H4 (strain HS).